The chain runs to 107 residues: U1-lycotoxin-Ls1s (107 aa).

The first 20 residues, 1 to 20 (MMKVLVVVALLVTLISYSSS), serve as a signal peptide directing secretion. The propeptide occupies 21 to 41 (EGIDDLEADELLSLMANEQTR). 4 cysteine pairs are disulfide-bonded: cysteine 44–cysteine 59, cysteine 51–cysteine 68, cysteine 58–cysteine 86, and cysteine 70–cysteine 84.

The protein belongs to the neurotoxin 19 (CSTX) family. 04 (U1-Lctx) subfamily. Expressed by the venom gland.

It localises to the secreted. The protein is U1-lycotoxin-Ls1s of Lycosa singoriensis (Wolf spider).